Here is a 120-residue protein sequence, read N- to C-terminus: A-type ATP synthase subunit F (120 aa).

Belongs to the V-ATPase F subunit family. In terms of assembly, has multiple subunits with at least A(3), B(3), C, D, E, F, H, I and proteolipid K(x).

The protein resides in the cell membrane. Its function is as follows. Component of the A-type ATP synthase that produces ATP from ADP in the presence of a proton gradient across the membrane. The protein is A-type ATP synthase subunit F of Halobacterium salinarum (strain ATCC 29341 / DSM 671 / R1).